Reading from the N-terminus, the 421-residue chain is Lipid II:glycine glycyltransferase (421 aa).

This sequence belongs to the FemABX family. As to quaternary structure, monomer.

It localises to the cytoplasm. The enzyme catalyses beta-D-GlcNAc-(1-&gt;4)-Mur2Ac(oyl-L-Ala-D-isoglutaminyl-L-Lys-D-Ala-D-Ala)-di-trans,octa-cis-undecaprenyl diphosphate + glycyl-tRNA(Gly) = beta-D-GlcNAc-(1-&gt;4)-Mur2Ac(oyl-L-Ala-D-isoglutaminyl-L-Lys-(N(6)-Gly)-D-Ala-D-Ala)-di-trans,octa-cis-undecaprenyl diphosphate + tRNA(Gly) + H(+). Catalyzes the incorporation of the first glycine of the pentaglycine interpeptide bridge, which is characteristic of the S.aureus peptidoglycan. This glycine is added to the epsilon-amino group of the L-lysine of the membrane-bound lipid II intermediate (GlcNAc-(beta-1,4)-N-acetylmuramic acid(-L-Ala-D-iGln-L-Lys-D-Ala-D-Ala)-pyrophosphoryl-undecaprenol), using glycyl-tRNA(Gly) as donor, in a ribosome-independent mechanism. Involved in methicillin resistance. The protein is Lipid II:glycine glycyltransferase (femX) of Staphylococcus aureus (strain USA300).